The sequence spans 114 residues: Small ribosomal subunit protein uS17 (114 aa).

The protein belongs to the universal ribosomal protein uS17 family. In terms of assembly, part of the 30S ribosomal subunit.

Functionally, one of the primary rRNA binding proteins, it binds specifically to the 5'-end of 16S ribosomal RNA. This is Small ribosomal subunit protein uS17 from Sulfolobus acidocaldarius (strain ATCC 33909 / DSM 639 / JCM 8929 / NBRC 15157 / NCIMB 11770).